Here is a 288-residue protein sequence, read N- to C-terminus: Syntaxin-1A (288 aa).

Residues 1–13 (MKDRTQELRTAKD) show a composition bias toward basic and acidic residues. The tract at residues 1-20 (MKDRTQELRTAKDSDDDDDV) is disordered. The Cytoplasmic segment spans residues 1 to 265 (MKDRTQELRT…KYQSKARRKK (265 aa)). 3 positions are modified to phosphoserine: S14, S64, and S95. A coiled-coil region spans residues 68–109 (DEKTKEELEELMSDIKKTANKVRSKLKSIEQSIEQEEGLNRS). S188 is modified (phosphoserine; by DAPK1). The t-SNARE coiled-coil homology domain occupies 192-254 (LSEIETRHSE…ERAVSDTKKA (63 aa)). Residues K252, K253, and K256 each participate in a glycyl lysine isopeptide (Lys-Gly) (interchain with G-Cter in SUMO) cross-link. A helical; Anchor for type IV membrane protein transmembrane segment spans residues 266-288 (IMIIICCVILGIIIASTIGGIFG).

This sequence belongs to the syntaxin family. In terms of assembly, part of the SNARE core complex containing SNAP25, VAMP2 and STX1A; this complex constitutes the basic catalytic machinery of the complex neurotransmitter release apparatus. The SNARE complex interacts with CPLX1. Interacts with STXBP1. The interaction with STXBP1 promotes assembly of the SNARE complex. Interacts (via C-terminus) with KCNB1 (via C-terminus); the interaction increases in a calcium-dependent manner and induces a pore-independent enhancement of exocytosis in neuroendocrine cells, chromaffin cells, pancreatic beta cells and from the soma of dorsal root ganglia (DRG) neurons. Interacts with SYTL4. Interacts with STXBP6. Interacts with PLCL1 (via C2 domain). Interacts with OTOF. Interacts with LGI3. Interacts (via the H3 domain) with SLC6A4 (via the N-terminus); this interaction regulates SLC4A6 channel conductance in thalamocortical neurons. Interacts with SYT6 and SYT8; the interaction is Ca(2+)-dependent. Interacts with VAMP8. Interacts with SNAP23. Interacts with VAPA and SYBU. Interacts with PRRT2. Interacts with SEPT8. Interacts with STXBP5L. Interacts with synaptotagmin-1/SYT1. Interacts with SEPTIN5; in the cerebellar cortex. Interacts with SEPTIN4; in the striatum. In terms of processing, phosphorylated by CK2. Phosphorylation at Ser-188 by DAPK1 significantly decreases its interaction with STXBP1. (Microbial infection) Targeted and hydrolyzed by C.botulinum neurotoxin type C (BoNT/C), which hydrolyzes the 253-Lys-|-Ala-254 bond. Cleavage inhibits neurotransmitter release. Post-translationally, phosphorylated by CK2. Phosphorylation at Ser-188 by DAPK1 significantly decreases its interaction with STXBP1. In terms of processing, sumoylated, sumoylation is required for regulation of synaptic vesicle endocytosis. In terms of tissue distribution, expressed predominantly in cerebral cortex, hippocampus, cerebellum, adrenal medulla and retina with weak expression detected in non-neuronal tissues.

The protein localises to the cytoplasmic vesicle. Its subcellular location is the secretory vesicle. It localises to the synaptic vesicle membrane. It is found in the cell membrane. The protein resides in the synapse. The protein localises to the synaptosome. Its function is as follows. Plays an essential role in hormone and neurotransmitter calcium-dependent exocytosis and endocytosis. Part of the SNARE (Soluble NSF Attachment Receptor) complex composed of SNAP25, STX1A and VAMP2 which mediates the fusion of synaptic vesicles with the presynaptic plasma membrane. STX1A and SNAP25 are localized on the plasma membrane while VAMP2 resides in synaptic vesicles. The pairing of the three SNAREs from the N-terminal SNARE motifs to the C-terminal anchors leads to the formation of the SNARE complex, which brings membranes into close proximity and results in final fusion. Participates in the calcium-dependent regulation of acrosomal exocytosis in sperm. Also plays an important role in the exocytosis of hormones such as insulin or glucagon-like peptide 1 (GLP-1). In Rattus norvegicus (Rat), this protein is Syntaxin-1A (Stx1a).